The chain runs to 509 residues: Proline-rich receptor-like protein kinase PERK15 (509 aa).

Positions 1–44 (MSTDTIPSLSSPPAPEFPSTTPDTATSPAPSQPSIIGPSSLAPF) are disordered. Topologically, residues 1–61 (MSTDTIPSLS…DGGSRNVALT (61 aa)) are extracellular. A compositionally biased stretch (low complexity) spans 18–34 (PSTTPDTATSPAPSQPS). A helical membrane pass occupies residues 62–82 (GLITGVVLGATFVLLGVCIFV). At 83–509 (CFYKRKKRKL…IEPEKNTKDT (427 aa)) the chain is on the cytoplasmic side. At Thr132 the chain carries Phosphothreonine. The region spanning 143-423 (FSNTNLLGQG…VRAFEGNISI (281 aa)) is the Protein kinase domain. Residues 149 to 157 (LGQGGFGYV) and Lys171 contribute to the ATP site. A Phosphotyrosine modification is found at Tyr216. Asp267 acts as the Proton acceptor in catalysis. Ser300 carries the post-translational modification Phosphoserine. Phosphothreonine is present on residues Thr301 and Thr306. Tyr314 bears the Phosphotyrosine mark. Polar residues predominate over residues 468–499 (FGSSECSGLTSDNGQNPSGSSSITEGQRTTQE). Residues 468–509 (FGSSECSGLTSDNGQNPSGSSSITEGQRTTQEIEPEKNTKDT) form a disordered region.

It belongs to the protein kinase superfamily. Ser/Thr protein kinase family. As to expression, mostly expressed in inflorescence bolts, and, to a lower extent, in flower buds and siliques.

The protein localises to the cell membrane. It catalyses the reaction L-seryl-[protein] + ATP = O-phospho-L-seryl-[protein] + ADP + H(+). It carries out the reaction L-threonyl-[protein] + ATP = O-phospho-L-threonyl-[protein] + ADP + H(+). This chain is Proline-rich receptor-like protein kinase PERK15 (PERK15), found in Arabidopsis thaliana (Mouse-ear cress).